A 169-amino-acid chain; its full sequence is uncharacterized protein (169 aa).

Residues 10–30 (YFVTILIIIIIILIVLLIVFL) traverse the membrane as a helical segment. The tract at residues 98 to 123 (QSKPINKNNQQTKNTPTPLDDRPDLS) is disordered. A compositionally biased stretch (low complexity) spans 100-115 (KPINKNNQQTKNTPTP).

The protein localises to the membrane. This is an uncharacterized protein from Acanthamoeba polyphaga (Amoeba).